Reading from the N-terminus, the 103-residue chain is Nucleoid-associated protein CFF8240_0066 (103 aa).

Belongs to the YbaB/EbfC family. As to quaternary structure, homodimer.

Its subcellular location is the cytoplasm. It is found in the nucleoid. Binds to DNA and alters its conformation. May be involved in regulation of gene expression, nucleoid organization and DNA protection. The polypeptide is Nucleoid-associated protein CFF8240_0066 (Campylobacter fetus subsp. fetus (strain 82-40)).